An 876-amino-acid polypeptide reads, in one-letter code: MTGNEARKTFLDYFENQGHRVVRSSSLVPQADPTLLFVNAGMVQFKRVFMGEEKRDYTTATTSQKCVRAGGKHNDLENVGYTARHHTFFEMLGNFSFGDYFKERAIELAWDLLLNGYKLPEDKLSVSVFHEDDEAFSIWKDRIGLAESRIARLGEKDNFWSMGDTGPCGPCSEIYMDRGEKYGCGRPDCAPGCDCDRFMEIWNMVFMQYNRQASGELTPLPHPSIDTGMGLERICAVIQDRDTNYETDLFIPIIRGIEAASGKTYGQAPDMDVCMKVIADHSRAAAFLIGDGVLPSNEGKGYVLRRILRRAIRYGRQLGLTRPFLSRTAGTVFEVMAEPYPELKENASFITNVLENEEVRFSETLDNGLRLLSETLDGMAAKGESVIPGGVIFKLYDTYGFPVDIVRDVVREKMIGLDMEGFDAAMAEQKAKSRSVVDFSKQPEAYRNLSAKGMKTGFVGYAGLAAQATVLALVNGGSELETATAGQEIEIVTDTTPFYGASGGQMGDVGVITADGLEITVTDTIKDPTGLVIHKGQVASGTVKKGQTISLAVDEDRRRATAANHTATHLLHAALGGIVGDHVKQAGSMVSPDRMRFDFTHFSMLDRATLDRIEVFVNDRIRENRAVTISEMSMDQAMEQGATALFEEKYGDTVRVVAVDGVSKELCGGTHAQRTGDIGLFKILSEASVASGVRRIEAVTGAGAVAFVQEQMGILAEAAGMLKESPAALAARIQKLLAESRTMAKEIAGLKTSLATASMEGPKSDDAKTLNGVKVIARTVTADNPAALRDLADRLKDKLGSGVVVLGAAADGKAFLIVSVSRDLTGRFKAGDIVREAAAVVGGKGGGRPDMAQAGGPQPEHLEAAIQKACDMIGKG.

Residues histidine 565, histidine 569, cysteine 667, and histidine 671 each coordinate Zn(2+).

Belongs to the class-II aminoacyl-tRNA synthetase family. It depends on Zn(2+) as a cofactor.

It localises to the cytoplasm. The enzyme catalyses tRNA(Ala) + L-alanine + ATP = L-alanyl-tRNA(Ala) + AMP + diphosphate. Its function is as follows. Catalyzes the attachment of alanine to tRNA(Ala) in a two-step reaction: alanine is first activated by ATP to form Ala-AMP and then transferred to the acceptor end of tRNA(Ala). Also edits incorrectly charged Ser-tRNA(Ala) and Gly-tRNA(Ala) via its editing domain. The sequence is that of Alanine--tRNA ligase from Desulfosudis oleivorans (strain DSM 6200 / JCM 39069 / Hxd3) (Desulfococcus oleovorans).